The primary structure comprises 570 residues: Dihydroxy-acid dehydratase (570 aa).

Cys61 contacts [2Fe-2S] cluster. A Mg(2+)-binding site is contributed by Asp94. Cys135 contributes to the [2Fe-2S] cluster binding site. Residues Asp136 and Lys137 each coordinate Mg(2+). An N6-carboxylysine modification is found at Lys137. Cys207 serves as a coordination point for [2Fe-2S] cluster. Glu459 lines the Mg(2+) pocket. Ser485 acts as the Proton acceptor in catalysis.

This sequence belongs to the IlvD/Edd family. As to quaternary structure, homodimer. It depends on [2Fe-2S] cluster as a cofactor. Mg(2+) serves as cofactor.

The catalysed reaction is (2R)-2,3-dihydroxy-3-methylbutanoate = 3-methyl-2-oxobutanoate + H2O. The enzyme catalyses (2R,3R)-2,3-dihydroxy-3-methylpentanoate = (S)-3-methyl-2-oxopentanoate + H2O. It participates in amino-acid biosynthesis; L-isoleucine biosynthesis; L-isoleucine from 2-oxobutanoate: step 3/4. It functions in the pathway amino-acid biosynthesis; L-valine biosynthesis; L-valine from pyruvate: step 3/4. Its function is as follows. Functions in the biosynthesis of branched-chain amino acids. Catalyzes the dehydration of (2R,3R)-2,3-dihydroxy-3-methylpentanoate (2,3-dihydroxy-3-methylvalerate) into 2-oxo-3-methylpentanoate (2-oxo-3-methylvalerate) and of (2R)-2,3-dihydroxy-3-methylbutanoate (2,3-dihydroxyisovalerate) into 2-oxo-3-methylbutanoate (2-oxoisovalerate), the penultimate precursor to L-isoleucine and L-valine, respectively. This Lactococcus lactis subsp. cremoris (strain SK11) protein is Dihydroxy-acid dehydratase.